The sequence spans 104 residues: Phosphoribosyl-ATP pyrophosphatase (104 aa).

The protein belongs to the PRA-PH family.

It localises to the cytoplasm. It carries out the reaction 1-(5-phospho-beta-D-ribosyl)-ATP + H2O = 1-(5-phospho-beta-D-ribosyl)-5'-AMP + diphosphate + H(+). Its pathway is amino-acid biosynthesis; L-histidine biosynthesis; L-histidine from 5-phospho-alpha-D-ribose 1-diphosphate: step 2/9. The protein is Phosphoribosyl-ATP pyrophosphatase of Rhizobium rhizogenes (strain K84 / ATCC BAA-868) (Agrobacterium radiobacter).